The sequence spans 110 residues: UPF0060 membrane protein Mmwyl1_1139 (110 aa).

4 helical membrane-spanning segments follow: residues 7–27 (ISLFMLTALAEIIGCYLPYLW), 33–53 (TIWLLVPAALSLAVFTWLLTL), 63–83 (AAYGGVYIFMAVLWLWIVDGI), and 87–107 (TWDMIGSAVALLGMAIIMFAP).

The protein belongs to the UPF0060 family.

Its subcellular location is the cell inner membrane. The polypeptide is UPF0060 membrane protein Mmwyl1_1139 (Marinomonas sp. (strain MWYL1)).